A 415-amino-acid chain; its full sequence is Glutamyl-tRNA reductase (415 aa).

Substrate contacts are provided by residues 49-52 (TCNR), S104, 109-111 (EPQ), and Q115. The active-site Nucleophile is the C50. Residue 184-189 (GAGEMI) coordinates NADP(+).

The protein belongs to the glutamyl-tRNA reductase family. In terms of assembly, homodimer.

The enzyme catalyses (S)-4-amino-5-oxopentanoate + tRNA(Glu) + NADP(+) = L-glutamyl-tRNA(Glu) + NADPH + H(+). It participates in porphyrin-containing compound metabolism; protoporphyrin-IX biosynthesis; 5-aminolevulinate from L-glutamyl-tRNA(Glu): step 1/2. Its function is as follows. Catalyzes the NADPH-dependent reduction of glutamyl-tRNA(Glu) to glutamate 1-semialdehyde (GSA). The sequence is that of Glutamyl-tRNA reductase from Neisseria meningitidis serogroup C / serotype 2a (strain ATCC 700532 / DSM 15464 / FAM18).